The following is a 244-amino-acid chain: tRNA pseudouridine synthase A (244 aa).

Catalysis depends on aspartate 55, which acts as the Nucleophile. Tyrosine 113 is a binding site for substrate.

It belongs to the tRNA pseudouridine synthase TruA family. As to quaternary structure, homodimer.

It catalyses the reaction uridine(38/39/40) in tRNA = pseudouridine(38/39/40) in tRNA. Its function is as follows. Formation of pseudouridine at positions 38, 39 and 40 in the anticodon stem and loop of transfer RNAs. The sequence is that of tRNA pseudouridine synthase A from Phytoplasma mali (strain AT).